A 689-amino-acid polypeptide reads, in one-letter code: Protein SDA1 homolog (689 aa).

Disordered stretches follow at residues Asp227–Lys260, Glu485–Trp512, and Thr623–Lys689. Residues Lys258–Asp319 are a coiled coil. Acidic residues predominate over residues Pro492–Trp512. The segment covering Arg670–Leu681 has biased composition (basic and acidic residues).

This sequence belongs to the SDA1 family.

It localises to the nucleus. Its subcellular location is the nucleolus. Its function is as follows. Required for 60S pre-ribosomal subunits export to the cytoplasm. The protein is Protein SDA1 homolog (sdad1) of Xenopus laevis (African clawed frog).